The chain runs to 207 residues: MTTAAFTPWILGLTGGIGSGKSAAAERFVELGVHLVDADQAARWVVEPGRPALASIVERFGPGVLQGDGQLDRAALRQLIFADPAQRKWLEQLLHPLIGQEIFSYLAKAQSPYAVYVSPLLIESGQHHKTQRVLVIDAPQDLQIARTLARDNTSAEHVQAILQAQLAREDRLRHADDVVVNDGGLAALHEQIDRLHHFYLTLKGGQP.

The DPCK domain maps to Ile-10–Pro-207. An ATP-binding site is contributed by Gly-18 to Ala-23.

It belongs to the CoaE family.

It localises to the cytoplasm. The catalysed reaction is 3'-dephospho-CoA + ATP = ADP + CoA + H(+). It participates in cofactor biosynthesis; coenzyme A biosynthesis; CoA from (R)-pantothenate: step 5/5. Catalyzes the phosphorylation of the 3'-hydroxyl group of dephosphocoenzyme A to form coenzyme A. In Pseudomonas putida (strain ATCC 47054 / DSM 6125 / CFBP 8728 / NCIMB 11950 / KT2440), this protein is Dephospho-CoA kinase.